The primary structure comprises 374 residues: Queuine tRNA-ribosyltransferase (374 aa).

Asp89 acts as the Proton acceptor in catalysis. Residues 89 to 93 (DSGGF), Asp143, Gln187, and Gly214 each bind substrate. Residues 245–251 (GVGKPED) form an RNA binding region. Asp264 (nucleophile) is an active-site residue. The RNA binding; important for wobble base 34 recognition stretch occupies residues 269–273 (TRNAR). The Zn(2+) site is built by Cys302, Cys304, Cys307, and His333.

The protein belongs to the queuine tRNA-ribosyltransferase family. As to quaternary structure, homodimer. Within each dimer, one monomer is responsible for RNA recognition and catalysis, while the other monomer binds to the replacement base PreQ1. Zn(2+) serves as cofactor.

It carries out the reaction 7-aminomethyl-7-carbaguanine + guanosine(34) in tRNA = 7-aminomethyl-7-carbaguanosine(34) in tRNA + guanine. Its pathway is tRNA modification; tRNA-queuosine biosynthesis. Catalyzes the base-exchange of a guanine (G) residue with the queuine precursor 7-aminomethyl-7-deazaguanine (PreQ1) at position 34 (anticodon wobble position) in tRNAs with GU(N) anticodons (tRNA-Asp, -Asn, -His and -Tyr). Catalysis occurs through a double-displacement mechanism. The nucleophile active site attacks the C1' of nucleotide 34 to detach the guanine base from the RNA, forming a covalent enzyme-RNA intermediate. The proton acceptor active site deprotonates the incoming PreQ1, allowing a nucleophilic attack on the C1' of the ribose to form the product. After dissociation, two additional enzymatic reactions on the tRNA convert PreQ1 to queuine (Q), resulting in the hypermodified nucleoside queuosine (7-(((4,5-cis-dihydroxy-2-cyclopenten-1-yl)amino)methyl)-7-deazaguanosine). The protein is Queuine tRNA-ribosyltransferase of Psychromonas ingrahamii (strain DSM 17664 / CCUG 51855 / 37).